The chain runs to 58 residues: Proteinase inhibitor PSKP-2 (58 aa).

The region spanning 1–58 (VIEPDCKKYEGKKCPPDIALVCGTNGREYYNECALCVFIRDSTLKADKAIKIKKWGKC) is the Kazal-like domain. Cystine bridges form between cysteine 6–cysteine 36, cysteine 14–cysteine 33, and cysteine 22–cysteine 58.

As to expression, skin.

The protein resides in the secreted. Functionally, may have a role in mucosal defense against microbes by interacting directly with their membranes. The sequence is that of Proteinase inhibitor PSKP-2 from Phyllomedusa sauvagei (Sauvage's leaf frog).